The following is a 312-amino-acid chain: uncharacterized protein (312 aa).

The protein belongs to the asfivirus CP312R family.

The protein resides in the virion. This is an uncharacterized protein from African swine fever virus (isolate Tick/South Africa/Pretoriuskop Pr4/1996) (ASFV).